A 1484-amino-acid polypeptide reads, in one-letter code: Ral GTPase-activating protein subunit beta (1484 aa).

2 disordered regions span residues 355 to 437 (PRSD…APRR) and 699 to 728 (ENNL…PDSE). Serine 359 is subject to Phosphoserine. A phosphothreonine mark is found at threonine 363 and threonine 379. 3 stretches are compositionally biased toward polar residues: residues 369 to 381 (SMPQ…TTPP), 392 to 428 (NKAT…TSSE), and 701 to 725 (NLKS…PTTP). Serine 421 and serine 710 each carry phosphoserine. Residue threonine 724 is modified to Phosphothreonine. A Rap-GAP domain is found at 1138 to 1382 (IGYLDLLPCR…TTLEKEVPVI (245 aa)). A Phosphoserine modification is found at serine 1275. The interval 1297–1325 (PNHTDSLNSSQRLSPSSRMKKLPQGRPVP) is disordered. Over residues 1302–1313 (SLNSSQRLSPSS) the composition is skewed to low complexity.

As to quaternary structure, component of the heterodimeric RalGAP1 complex with RALGAPA1 and of the heterodimeric RalGAP2 complex with RALGAPA2. Heterodimerization is required for activity. In terms of tissue distribution, abundantly expressed in testis, pancreas, lung, thymus, brown fat, and white fat. Expressed at lower levels in the brain.

Functionally, non-catalytic subunit of the heterodimeric RalGAP1 and RalGAP2 complexes which act as GTPase activators for the Ras-like small GTPases RALA and RALB. This chain is Ral GTPase-activating protein subunit beta (Ralgapb), found in Mus musculus (Mouse).